The chain runs to 151 residues: Differentiation-associated protein 2 (151 aa).

A signal peptide spans 1 to 22; it reads MKQIIRLITTLLLLSLIGITCA.

The protein resides in the endoplasmic reticulum. It localises to the vacuole. Has an essential role in the initiation of differentiation. Also required for cAMP signaling. In Dictyostelium discoideum (Social amoeba), this protein is Differentiation-associated protein 2 (dia2).